The sequence spans 181 residues: MEKNCMIMAIDNSQVDDSHTTQEELYIQKAVNAMVDRVSYMRGIKDIDKLNSIILYRITNFSQDCVMVEYFCKDDENNDEKYNIIFIHAREKDGSLLQEKCIKPRPFQKIYLTGSVENKMLILCDCLDILGDINNLRLNFYNGACGYLKLNNIDSTLKRTYSFNDDKLIITNNSNGKSFNF.

This is an uncharacterized protein from Acheta domesticus (House cricket).